Consider the following 323-residue polypeptide: tRNA dimethylallyltransferase (323 aa).

ATP is bound at residue 12–19; the sequence is GPTAAGKT. 14 to 19 contacts substrate; that stretch reads TAAGKT. Interaction with substrate tRNA stretches follow at residues 37–40 and 161–165; these read DSAL and QRLIR.

This sequence belongs to the IPP transferase family. Monomer. Mg(2+) serves as cofactor.

It catalyses the reaction adenosine(37) in tRNA + dimethylallyl diphosphate = N(6)-dimethylallyladenosine(37) in tRNA + diphosphate. Functionally, catalyzes the transfer of a dimethylallyl group onto the adenine at position 37 in tRNAs that read codons beginning with uridine, leading to the formation of N6-(dimethylallyl)adenosine (i(6)A). The protein is tRNA dimethylallyltransferase of Pseudomonas savastanoi pv. phaseolicola (strain 1448A / Race 6) (Pseudomonas syringae pv. phaseolicola (strain 1448A / Race 6)).